We begin with the raw amino-acid sequence, 207 residues long: uncharacterized protein (207 aa).

This is an uncharacterized protein from Rhizobium meliloti (Ensifer meliloti).